Here is a 371-residue protein sequence, read N- to C-terminus: Carbamoyl phosphate synthase small chain (371 aa).

The tract at residues 1-186 (MDYYNNDTPG…IHQGKTGDVV (186 aa)) is CPSase. The L-glutamine site is built by S52, G233, and G235. The Glutamine amidotransferase type-1 domain occupies 185 to 371 (VVVVVDCGIK…KFKKMVVGDA (187 aa)). The active-site Nucleophile is the C261. L262, Q265, N303, G305, and Y306 together coordinate L-glutamine. Active-site residues include H346 and E348.

This sequence belongs to the CarA family. As to quaternary structure, composed of two chains; the small (or glutamine) chain promotes the hydrolysis of glutamine to ammonia, which is used by the large (or ammonia) chain to synthesize carbamoyl phosphate. Tetramer of heterodimers (alpha,beta)4.

It catalyses the reaction hydrogencarbonate + L-glutamine + 2 ATP + H2O = carbamoyl phosphate + L-glutamate + 2 ADP + phosphate + 2 H(+). It carries out the reaction L-glutamine + H2O = L-glutamate + NH4(+). Its pathway is amino-acid biosynthesis; L-arginine biosynthesis; carbamoyl phosphate from bicarbonate: step 1/1. The protein operates within pyrimidine metabolism; UMP biosynthesis via de novo pathway; (S)-dihydroorotate from bicarbonate: step 1/3. Small subunit of the glutamine-dependent carbamoyl phosphate synthetase (CPSase). CPSase catalyzes the formation of carbamoyl phosphate from the ammonia moiety of glutamine, carbonate, and phosphate donated by ATP, constituting the first step of 2 biosynthetic pathways, one leading to arginine and/or urea and the other to pyrimidine nucleotides. The small subunit (glutamine amidotransferase) binds and cleaves glutamine to supply the large subunit with the substrate ammonia. This Sulfolobus acidocaldarius (strain ATCC 33909 / DSM 639 / JCM 8929 / NBRC 15157 / NCIMB 11770) protein is Carbamoyl phosphate synthase small chain.